The sequence spans 146 residues: Large ribosomal subunit protein uL15 (146 aa).

The segment at 1-57 (MKLFELQPAPGSKKLPKRKGRGHGTGNGKTAGRGHKGQNARSGGGVRPGFEGGQMPL) is disordered. Positions 42–52 (SGGGVRPGFEG) are enriched in gly residues.

This sequence belongs to the universal ribosomal protein uL15 family. Part of the 50S ribosomal subunit.

In terms of biological role, binds to the 23S rRNA. The polypeptide is Large ribosomal subunit protein uL15 (Acetivibrio thermocellus (strain ATCC 27405 / DSM 1237 / JCM 9322 / NBRC 103400 / NCIMB 10682 / NRRL B-4536 / VPI 7372) (Clostridium thermocellum)).